The primary structure comprises 524 residues: RNA-splicing ligase RtcB homolog 1 (524 aa).

5 residues coordinate Mn(2+): Asp-141, Cys-144, His-249, His-281, and His-372. 248-252 lines the GMP pocket; that stretch reads NHYLE. GMP is bound by residues 372–373, 421–424, Ser-428, 447–450, and Lys-523; these read HN, GGSM, and HGAG. Residue His-447 is the GMP-histidine intermediate of the active site.

Belongs to the RtcB family. In terms of assembly, catalytic component of the tRNA-splicing ligase complex. Mn(2+) serves as cofactor.

It carries out the reaction a 3'-end 3'-phospho-ribonucleotide-RNA + a 5'-end dephospho-ribonucleoside-RNA + GTP = a ribonucleotidyl-ribonucleotide-RNA + GMP + diphosphate. The catalysed reaction is a 3'-end 2',3'-cyclophospho-ribonucleotide-RNA + a 5'-end dephospho-ribonucleoside-RNA + GTP + H2O = a ribonucleotidyl-ribonucleotide-RNA + GMP + diphosphate + H(+). Functionally, catalytic subunit of the tRNA-splicing ligase complex that acts by directly joining spliced tRNA halves to mature-sized tRNAs by incorporating the precursor-derived splice junction phosphate into the mature tRNA as a canonical 3',5'-phosphodiester. May act as an RNA ligase with broad substrate specificity, and may function toward other RNAs. The protein is RNA-splicing ligase RtcB homolog 1 of Entamoeba histolytica (strain ATCC 30459 / HM-1:IMSS / ABRM).